The chain runs to 2493 residues: Non-reducing polyketide synthase pkiA (2493 aa).

The tract at residues 129-243 (PLLMMTHFVQ…VQYDENRATI (115 aa)) is N-terminal acylcarrier protein transacylase domain (SAT). Cys160 serves as the catalytic Nucleophile; for transacylase activity. The active-site Proton donor/acceptor; for transacylase activity is His274. One can recognise a Ketosynthase family 3 (KS3) domain in the interval 401-818 (ETDIAIVGMA…GSNASMVITQ (418 aa)). Residues Cys567, His702, and His741 each act as for beta-ketoacyl synthase activity in the active site. The interval 926 to 1261 (CFGGQVGRSI…EYAPLLLPPY (336 aa)) is malonyl-CoA:ACP transacylase (MAT). Residues 1259-1387 (PPYQFERTRH…AHISMHDVRC (129 aa)) are N-terminal hotdog fold. One can recognise a PKS/mFAS DH domain in the interval 1259-1562 (PPYQFERTRH…YSRVAKSLFT (304 aa)). The active-site Proton acceptor; for dehydratase activity is the His1291. The tract at residues 1297–1558 (APIAPATLLL…LGLRYSRVAK (262 aa)) is product template (PT) domain. The tract at residues 1415–1562 (VDDILQGRNV…YSRVAKSLFT (148 aa)) is C-terminal hotdog fold. Catalysis depends on Asp1471, which acts as the Proton donor; for dehydratase activity. One can recognise a Carrier domain in the interval 1588–1662 (KDLVSRVKAV…DLVQAVQSAL (75 aa)). An O-(pantetheine 4'-phosphoryl)serine modification is found at Ser1622. The tract at residues 1822–2063 (REYPEYGGAS…YGHVDWTDGE (242 aa)) is methyltransferase (CMeT) domain. Positions 2128–2366 (VTGATGSLGS…TPVDVAARII (239 aa)) are NADPH-binding domain.

The cofactor is pantetheine 4'-phosphate.

The enzyme catalyses decanoyl-[ACP] + 4 malonyl-CoA + AH2 + S-adenosyl-L-methionine + 3 H(+) = 2,4-dihydroxy-3-methyl-6-(2-oxoundecyl)benzaldehyde + holo-[ACP] + A + S-adenosyl-L-homocysteine + 4 CO2 + 4 CoA + H2O. It functions in the pathway secondary metabolite biosynthesis. Its function is as follows. Non-reducing polyketide synthase; part of the pki gene cluster that mediates the biosynthesis of 2,4-dihydroxy-3-methyl-6-(2-oxoundecyl)benzaldehyde. The first step in the pathway is the generation of the decanoyl starter unit by the FAS composed of subunits pkiB and pkiC, which is then transferred directly from the FAS to the SAT domain of the non-reducing polyketide synthase pkiA. PkiA condenses the decanoyyl starter unit with 4 malonyl-CoA units and performs one methylation step to yield 2,4-dihydroxy-3-methyl-6-(2-oxoundecyl)benzaldehyde. This chain is Non-reducing polyketide synthase pkiA, found in Emericella nidulans (strain FGSC A4 / ATCC 38163 / CBS 112.46 / NRRL 194 / M139) (Aspergillus nidulans).